The chain runs to 383 residues: 1-deoxy-D-xylulose 5-phosphate reductoisomerase (383 aa).

NADPH contacts are provided by Thr10, Gly11, Ser12, Ile13, Asn38, and Asn121. 1-deoxy-D-xylulose 5-phosphate is bound at residue Lys122. Position 123 (Glu123) interacts with NADPH. Mn(2+) is bound at residue Asp147. 1-deoxy-D-xylulose 5-phosphate is bound by residues Ser148, Glu149, Ser172, and His195. Glu149 contributes to the Mn(2+) binding site. Gly201 lines the NADPH pocket. 4 residues coordinate 1-deoxy-D-xylulose 5-phosphate: Ser208, Asn213, Lys214, and Glu217. Glu217 is a binding site for Mn(2+).

The protein belongs to the DXR family. Requires Mg(2+) as cofactor. Mn(2+) serves as cofactor.

It carries out the reaction 2-C-methyl-D-erythritol 4-phosphate + NADP(+) = 1-deoxy-D-xylulose 5-phosphate + NADPH + H(+). It participates in isoprenoid biosynthesis; isopentenyl diphosphate biosynthesis via DXP pathway; isopentenyl diphosphate from 1-deoxy-D-xylulose 5-phosphate: step 1/6. Catalyzes the NADPH-dependent rearrangement and reduction of 1-deoxy-D-xylulose-5-phosphate (DXP) to 2-C-methyl-D-erythritol 4-phosphate (MEP). This is 1-deoxy-D-xylulose 5-phosphate reductoisomerase from Vesicomyosocius okutanii subsp. Calyptogena okutanii (strain HA).